A 213-amino-acid chain; its full sequence is Putative amidate substrates transporter protein (213 aa).

The next 6 membrane-spanning stretches (helical) occupy residues 4 to 20 (VGLF…GLML), 32 to 48 (LNFF…TVLI), 56 to 72 (AVIF…FTYL), 116 to 132 (VIWL…FLLL), 146 to 162 (VAVA…AFLI), and 172 to 188 (LPAA…VVLA).

The protein belongs to the AmiS/UreI family.

It localises to the cell membrane. Possible transporter that might be responsible for the adsorption of amidase substrates or release of their hydrolysis products. This is Putative amidate substrates transporter protein from Mycolicibacterium smegmatis (Mycobacterium smegmatis).